A 351-amino-acid chain; its full sequence is S-adenosylmethionine:tRNA ribosyltransferase-isomerase (351 aa).

It belongs to the QueA family. Monomer.

It localises to the cytoplasm. It catalyses the reaction 7-aminomethyl-7-carbaguanosine(34) in tRNA + S-adenosyl-L-methionine = epoxyqueuosine(34) in tRNA + adenine + L-methionine + 2 H(+). The protein operates within tRNA modification; tRNA-queuosine biosynthesis. Functionally, transfers and isomerizes the ribose moiety from AdoMet to the 7-aminomethyl group of 7-deazaguanine (preQ1-tRNA) to give epoxyqueuosine (oQ-tRNA). This Fusobacterium nucleatum subsp. nucleatum (strain ATCC 25586 / DSM 15643 / BCRC 10681 / CIP 101130 / JCM 8532 / KCTC 2640 / LMG 13131 / VPI 4355) protein is S-adenosylmethionine:tRNA ribosyltransferase-isomerase.